We begin with the raw amino-acid sequence, 145 residues long: Large ribosomal subunit protein uL13 (145 aa).

The protein belongs to the universal ribosomal protein uL13 family. In terms of assembly, part of the 50S ribosomal subunit.

Its function is as follows. This protein is one of the early assembly proteins of the 50S ribosomal subunit, although it is not seen to bind rRNA by itself. It is important during the early stages of 50S assembly. The chain is Large ribosomal subunit protein uL13 from Listeria innocua serovar 6a (strain ATCC BAA-680 / CLIP 11262).